A 979-amino-acid chain; its full sequence is Putative cellulose synthase-like protein D6 (979 aa).

The interval 1 to 24 (MMDGESPLRHPRISHVSNSGSDFG) is disordered. Residues 14–24 (SHVSNSGSDFG) show a composition bias toward low complexity. The next 2 helical transmembrane spans lie at 116-136 (IIIALYRILIVVRVVSLALFL) and 147-167 (ALWLWLLSVICELWFAFSWLL). Residues aspartate 247 and aspartate 683 contribute to the active site. 6 helical membrane passes run 765–785 (IFILTYCFLPPLSLFSGHFVV), 788–808 (LTGSFLIYLLIITLSLCGLAV), 837–857 (LVAVLQGILKVIAGVEISFTL), 882–902 (ALMIPPLTIIILNIVAILFAV), 913–933 (WSNLLGGTFFASWVLLHMYPF), and 946–966 (TVVYVWSGLIAICLSLLYITI).

This sequence belongs to the glycosyltransferase 2 family. Plant cellulose synthase-like D subfamily.

It localises to the golgi apparatus membrane. Thought to be a Golgi-localized beta-glycan synthase that polymerize the backbones of noncellulosic polysaccharides (hemicelluloses) of plant cell wall. This Arabidopsis thaliana (Mouse-ear cress) protein is Putative cellulose synthase-like protein D6 (CSLD6).